A 1242-amino-acid polypeptide reads, in one-letter code: Phosphorylase b kinase regulatory subunit alpha, skeletal muscle isoform (1242 aa).

9 positions are modified to phosphoserine: S630, S731, S737, S740, S760, S813, S974, S983, and S987. The tract at residues 812-842 (LSELYVKVGEIRHWGLIRYISGILRKKVEAL) is calmodulin-binding. S1009 is subject to Phosphoserine; by autocatalysis. A Phosphoserine; by PKA modification is found at S1020. S1022 and S1025 each carry phosphoserine. The interval 1065–1105 (SKDSRQGQWQRRRRLDGALNRVPIGFYQKVWKILQKCHGLS) is calmodulin-binding. At S1132 the chain carries Phosphoserine. C1239 carries the S-farnesyl cysteine lipid modification.

It belongs to the phosphorylase b kinase regulatory chain family. Hexadecamer of 4 heterotetramers, each composed of alpha, beta, gamma, and delta subunits. Alpha (PHKA1 or PHKA2) and beta (PHKB) are regulatory subunits, gamma (PHKG1 or PHKG2) is the catalytic subunit, and delta is calmodulin. In terms of processing, although the final Cys may be farnesylated, the terminal tripeptide is probably not removed, and the C-terminus is not methylated.

The protein resides in the cell membrane. Its pathway is glycan biosynthesis; glycogen metabolism. By phosphorylation of various serine residues and by calcium. Functionally, phosphorylase b kinase catalyzes the phosphorylation of serine in certain substrates, including troponin I. The alpha chain may bind calmodulin. This is Phosphorylase b kinase regulatory subunit alpha, skeletal muscle isoform (Phka1) from Rattus norvegicus (Rat).